A 341-amino-acid polypeptide reads, in one-letter code: Methionine import ATP-binding protein MetN 2 (341 aa).

The ABC transporter domain occupies 2–241 (IKLNQIVKRY…PQHEVTKRFV (240 aa)). Position 38 to 45 (38 to 45 (GFSGAGKS)) interacts with ATP.

It belongs to the ABC transporter superfamily. Methionine importer (TC 3.A.1.24) family. In terms of assembly, the complex is composed of two ATP-binding proteins (MetN), two transmembrane proteins (MetI) and a solute-binding protein (MetQ).

The protein localises to the cell membrane. It catalyses the reaction L-methionine(out) + ATP + H2O = L-methionine(in) + ADP + phosphate + H(+). It carries out the reaction D-methionine(out) + ATP + H2O = D-methionine(in) + ADP + phosphate + H(+). Part of the ABC transporter complex MetNIQ involved in methionine import. Responsible for energy coupling to the transport system. The polypeptide is Methionine import ATP-binding protein MetN 2 (Staphylococcus epidermidis (strain ATCC 35984 / DSM 28319 / BCRC 17069 / CCUG 31568 / BM 3577 / RP62A)).